Consider the following 1217-residue polypeptide: WD repeat-containing protein on Y chromosome (1217 aa).

WD repeat units follow at residues 155 to 199, 323 to 362, 366 to 405, 456 to 495, 508 to 547, 595 to 635, 740 to 779, and 823 to 862; these read EDMT…LRSA, RIPLGVSVFYVSEVKNILVTGGPDTFVRIWDVYISSEPSA, GHNGGIVAVFVQPEENKVYSVDYHKIIKVWDLQEHTLLQT, THAAPVSVVLYNRLFRNIVTCGLDSYIIVWDPWTGRRKII, TIDIEITAACFDPLEQFLLTGARDGSLKIWNYNNSVVVRN, FHTD…RRYN, KVGDCVLTMATDRKNRFLYTGTAFGYIKIWHIVNYCIPEA, and GHLKAINSIGFINLPKILFSGSHDYSCRLWTQSGRYLGTL. Disordered regions lie at residues 910-929 and 1033-1217; these read QVKRPKPTEEREDEGEVEDT and AGGQ…KDKP. The segment covering 919 to 929 has biased composition (acidic residues); the sequence is EREDEGEVEDT. 3 stretches are compositionally biased toward polar residues: residues 1041–1054, 1085–1107, and 1137–1179; these read RASSTWGKPKTNSI, FGPNPSRVRSNSPKVSFMPSQLK, and PVST…TSAN. Residues 1181 to 1190 show a composition bias toward low complexity; it reads KPDIMPVKIK. Residues 1198–1210 show a composition bias toward polar residues; it reads RNTAPVQITTSIA.

The chain is WD repeat-containing protein on Y chromosome from Drosophila mojavensis (Fruit fly).